The chain runs to 356 residues: Glutamine synthetase PR-1 (356 aa).

The GS beta-grasp domain occupies 19-99; that stretch reads VIAEYIWIGG…VICDAYTPAG (81 aa). The tract at residues 41-64 is disordered; the sequence is PGPVKNPSELPKWNYDGSSTGQAP. Positions 106–356 constitute a GS catalytic domain; it reads KRHNAAKIFS…IADTTILWKP (251 aa).

Belongs to the glutamine synthetase family. As to quaternary structure, homooctamer. As to expression, roots.

The protein localises to the cytoplasm. It carries out the reaction L-glutamate + NH4(+) + ATP = L-glutamine + ADP + phosphate + H(+). In Phaseolus vulgaris (Kidney bean), this protein is Glutamine synthetase PR-1.